Consider the following 458-residue polypeptide: UDP-N-acetylmuramoylalanine--D-glutamate ligase (458 aa).

Residue 124–130 (GSDGKTT) coordinates ATP.

It belongs to the MurCDEF family.

The protein resides in the cytoplasm. It carries out the reaction UDP-N-acetyl-alpha-D-muramoyl-L-alanine + D-glutamate + ATP = UDP-N-acetyl-alpha-D-muramoyl-L-alanyl-D-glutamate + ADP + phosphate + H(+). The protein operates within cell wall biogenesis; peptidoglycan biosynthesis. Cell wall formation. Catalyzes the addition of glutamate to the nucleotide precursor UDP-N-acetylmuramoyl-L-alanine (UMA). This Clostridium botulinum (strain Kyoto / Type A2) protein is UDP-N-acetylmuramoylalanine--D-glutamate ligase.